A 572-amino-acid polypeptide reads, in one-letter code: Mitochondrial distribution and morphology protein 34 (572 aa).

An SMP-LTD domain is found at 1-195; the sequence is MAFNFNWSPL…LPAIIHRLSL (195 aa). 3 disordered regions span residues 210 to 239, 330 to 423, and 455 to 482; these read TQAE…VDAL, SASI…PLSP, and RDMG…TPRA. Positions 330-347 are enriched in polar residues; sequence SASIASMQTRSSTPSHTF. Over residues 358–370 the composition is skewed to basic residues; it reads RHSKAHSRKRKKR. Residues 371-381 show a composition bias toward basic and acidic residues; sequence VVDLRRPKTTD. Composition is skewed to polar residues over residues 387–400 and 460–480; these read SDES…SAPS and PSST…SATP.

The protein belongs to the MDM34 family. As to quaternary structure, component of the ER-mitochondria encounter structure (ERMES) or MDM complex, composed of mmm1, mdm10, mdm12 and mdm34.

It localises to the mitochondrion outer membrane. Its function is as follows. Component of the ERMES/MDM complex, which serves as a molecular tether to connect the endoplasmic reticulum (ER) and mitochondria. Components of this complex are involved in the control of mitochondrial shape and protein biogenesis, and function in nonvesicular lipid trafficking between the ER and mitochondria. Mdm34 is required for the interaction of the ER-resident membrane protein mmm1 and the outer mitochondrial membrane-resident beta-barrel protein mdm10. The chain is Mitochondrial distribution and morphology protein 34 from Aspergillus clavatus (strain ATCC 1007 / CBS 513.65 / DSM 816 / NCTC 3887 / NRRL 1 / QM 1276 / 107).